The sequence spans 256 residues: 5'-nucleotidase SurE (256 aa).

A divalent metal cation is bound by residues Asp-8, Asp-9, Ser-39, and Asn-95.

This sequence belongs to the SurE nucleotidase family. A divalent metal cation is required as a cofactor.

Its subcellular location is the cytoplasm. The enzyme catalyses a ribonucleoside 5'-phosphate + H2O = a ribonucleoside + phosphate. Its function is as follows. Nucleotidase that shows phosphatase activity on nucleoside 5'-monophosphates. The polypeptide is 5'-nucleotidase SurE (Methanosphaera stadtmanae (strain ATCC 43021 / DSM 3091 / JCM 11832 / MCB-3)).